The sequence spans 338 residues: RNA 3'-terminal phosphate cyclase (338 aa).

ATP contacts are provided by residues Q103 and 283–287; that span reads YLADQ. H308 (tele-AMP-histidine intermediate) is an active-site residue.

This sequence belongs to the RNA 3'-terminal cyclase family. Type 1 subfamily.

It localises to the cytoplasm. It catalyses the reaction a 3'-end 3'-phospho-ribonucleotide-RNA + ATP = a 3'-end 2',3'-cyclophospho-ribonucleotide-RNA + AMP + diphosphate. Its function is as follows. Catalyzes the conversion of 3'-phosphate to a 2',3'-cyclic phosphodiester at the end of RNA. The mechanism of action of the enzyme occurs in 3 steps: (A) adenylation of the enzyme by ATP; (B) transfer of adenylate to an RNA-N3'P to produce RNA-N3'PP5'A; (C) and attack of the adjacent 2'-hydroxyl on the 3'-phosphorus in the diester linkage to produce the cyclic end product. The biological role of this enzyme is unknown but it is likely to function in some aspects of cellular RNA processing. The polypeptide is RNA 3'-terminal phosphate cyclase (Escherichia coli O127:H6 (strain E2348/69 / EPEC)).